A 227-amino-acid chain; its full sequence is Phosphoribosylformylglycinamidine synthase subunit PurQ (227 aa).

The Glutamine amidotransferase type-1 domain occupies 3-225; sequence FAVIVFPGSN…LKQWRETYVV (223 aa). Cys86 serves as the catalytic Nucleophile. Active-site residues include His194 and Glu196.

As to quaternary structure, part of the FGAM synthase complex composed of 1 PurL, 1 PurQ and 2 PurS subunits.

Its subcellular location is the cytoplasm. The catalysed reaction is N(2)-formyl-N(1)-(5-phospho-beta-D-ribosyl)glycinamide + L-glutamine + ATP + H2O = 2-formamido-N(1)-(5-O-phospho-beta-D-ribosyl)acetamidine + L-glutamate + ADP + phosphate + H(+). It carries out the reaction L-glutamine + H2O = L-glutamate + NH4(+). It participates in purine metabolism; IMP biosynthesis via de novo pathway; 5-amino-1-(5-phospho-D-ribosyl)imidazole from N(2)-formyl-N(1)-(5-phospho-D-ribosyl)glycinamide: step 1/2. Functionally, part of the phosphoribosylformylglycinamidine synthase complex involved in the purines biosynthetic pathway. Catalyzes the ATP-dependent conversion of formylglycinamide ribonucleotide (FGAR) and glutamine to yield formylglycinamidine ribonucleotide (FGAM) and glutamate. The FGAM synthase complex is composed of three subunits. PurQ produces an ammonia molecule by converting glutamine to glutamate. PurL transfers the ammonia molecule to FGAR to form FGAM in an ATP-dependent manner. PurS interacts with PurQ and PurL and is thought to assist in the transfer of the ammonia molecule from PurQ to PurL. The protein is Phosphoribosylformylglycinamidine synthase subunit PurQ of Bacillus cereus (strain B4264).